A 120-amino-acid polypeptide reads, in one-letter code: NAD(P)H-quinone oxidoreductase subunit 3, chloroplastic (120 aa).

Helical transmembrane passes span 7–27, 64–84, and 89–109; these read YNYF…AFSI, MFAL…PWAM, and LGIP…IGLI.

The protein belongs to the complex I subunit 3 family. NDH is composed of at least 16 different subunits, 5 of which are encoded in the nucleus.

The protein resides in the plastid. The protein localises to the chloroplast thylakoid membrane. It carries out the reaction a plastoquinone + NADH + (n+1) H(+)(in) = a plastoquinol + NAD(+) + n H(+)(out). It catalyses the reaction a plastoquinone + NADPH + (n+1) H(+)(in) = a plastoquinol + NADP(+) + n H(+)(out). NDH shuttles electrons from NAD(P)H:plastoquinone, via FMN and iron-sulfur (Fe-S) centers, to quinones in the photosynthetic chain and possibly in a chloroplast respiratory chain. The immediate electron acceptor for the enzyme in this species is believed to be plastoquinone. Couples the redox reaction to proton translocation, and thus conserves the redox energy in a proton gradient. This is NAD(P)H-quinone oxidoreductase subunit 3, chloroplastic from Anthoceros angustus (Hornwort).